An 8892-amino-acid chain; its full sequence is Nonribosomal peptide synthetase 32 (8892 aa).

The Carrier 1 domain maps to glutamate 12–asparagine 85. Position 46 is an O-(pantetheine 4'-phosphoryl)serine (serine 46). The segment at alanine 88 to isoleucine 112 is disordered. Residues asparagine 93–asparagine 108 are compositionally biased toward low complexity. Residues proline 567 to phenylalanine 956 form a condensation 1 region. The interval lysine 989–arginine 1386 is adenylation 1. The 77-residue stretch at isoleucine 1523 to glutamine 1599 folds into the Carrier 2 domain. Serine 1560 carries the O-(pantetheine 4'-phosphoryl)serine modification. The epimerization 1 stretch occupies residues glycine 1609–asparagine 2039. The tract at residues glutamate 2083–leucine 2518 is condensation 2. An adenylation 2 region spans residues serine 2543 to arginine 2934. The Carrier 3 domain occupies serine 3061–arginine 3137. Serine 3098 carries the O-(pantetheine 4'-phosphoryl)serine modification. Residues leucine 3153–glutamate 3590 form an epimerization 2 region. A condensation 3 region spans residues glutamate 3634–threonine 4061. Positions threonine 4098 to arginine 4488 are adenylation 3. The region spanning alanine 4627 to cysteine 4703 is the Carrier 4 domain. The residue at position 4664 (serine 4664) is an O-(pantetheine 4'-phosphoryl)serine. The condensation 4 stretch occupies residues glutamate 4760 to leucine 5181. Residues threonine 5205–arginine 5605 form an adenylation 4 region. The Carrier 5 domain occupies methionine 5745–glycine 5821. Serine 5782 carries the post-translational modification O-(pantetheine 4'-phosphoryl)serine. Residues glutamate 5868–isoleucine 6285 form a condensation 5 region. The adenylation 5 stretch occupies residues glutamine 6307–arginine 6700. The region spanning glutamate 6834–glutamate 6911 is the Carrier 6 domain. Serine 6872 carries the O-(pantetheine 4'-phosphoryl)serine modification. An epimerization 3 region spans residues asparagine 6923–valine 7360. The segment at valine 7403 to isoleucine 7834 is condensation 6. The tract at residues glutamine 7855–isoleucine 8253 is adenylation 6. One can recognise a Carrier 7 domain in the interval alanine 8380–isoleucine 8456. Serine 8417 bears the O-(pantetheine 4'-phosphoryl)serine mark. The tract at residues histidine 8490–valine 8878 is condensation 7.

It belongs to the NRP synthetase family.

Its pathway is secondary metabolite biosynthesis. Functionally, nonribosomal peptide synthetase; part of the gene cluster that mediates the biosynthesis of the lipopeptides W493 A and B. W493 A and B consist of six amino acid residues D-allo-thr, L-Ala, D-Ala, L-Gln, D-Tyr, and L-Val/L-Ile linked to a 3-hydroxy-4-methyltetradecanoic acid polyketide chain. The biosynthesis starts with formation of the linear polyketide chain by the highly reducing polyketide synthase PKS40. The gene cluster contains a putative acyl-CoA ligase (FPSE_09184) for formation of a CoA thioester polyketide. The thiol bond could be hydrolyzed by the putative thioesterase (FPSE_09186) and then accepted by the first T domain in module 1 of NRPS32. The second T domain is responsible for accepting a threonine, which is adenylated by the A domain and epimerized to the D-allo-threonine formed by the E domain. The five successive modules incorporate Ala, Ala, Gln, Tyr, and Val/Ile into the final product, which is released by cyclization. This is Nonribosomal peptide synthetase 32 from Fusarium pseudograminearum (strain CS3096) (Wheat and barley crown-rot fungus).